The sequence spans 496 residues: MFNTGTPDSENTYDAILVGAGIMSSTLAVLLHELEPDLRLLVVEKLSSAGLESSCAKNNAGTGHAANCELNYTPIQEDGHLSTTKAFEINKSFEQSLEFWASLAEKGKLIPKTFLNKLPHISLVFGDEDISLLKKRFSKLSSHAAFAKMEFTMDHGELQDWIPLIMDGRKQSEKIAATRIKRGTDIDFGNLTRSYINQIEGAKSIDINYSTNVENLQQDSEGDWYLSLEGAKKNRIVRSKFVFLGAGGGALSLLQKSRIPEGLLYAGFPVSGKWLICDEEKSTKTHNAKVYGKAAVGAPPMSVPHLDTRWIDKKKSLLFGPFAGFSSNFLKYGSKLDLFRSIKTTNLFSMLQAGLDNIDLGKYLLNQLIQTNEDRIDTLKRFLPQVSPNDWKLSTAGQRVQIIKQTSKGGVLKMGTEVVTSSDGSLAALLGASPGASTAVTIMIEVLNRCWQEKMKSSKWKNKMLELFPSIGTDINSDQEALLAIRKRNDFLLKLI.

This sequence belongs to the MQO family. It depends on FAD as a cofactor.

The catalysed reaction is (S)-malate + a quinone = a quinol + oxaloacetate. It functions in the pathway carbohydrate metabolism; tricarboxylic acid cycle; oxaloacetate from (S)-malate (quinone route): step 1/1. The chain is Probable malate:quinone oxidoreductase from Prochlorococcus marinus (strain NATL2A).